A 1224-amino-acid chain; its full sequence is ATP-dependent helicase/nuclease subunit A (1224 aa).

The UvrD-like helicase ATP-binding domain occupies 15 to 480; the sequence is VIWTDAQWQS…IDLSQNFRSR (466 aa). 36-43 lines the ATP pocket; sequence AAAGSGKT. The region spanning 497-791 is the UvrD-like helicase C-terminal domain; that stretch reads EQVGEISYDD…RMMTIHSSKG (295 aa).

The protein belongs to the helicase family. AddA subfamily. In terms of assembly, heterodimer of AddA and AddB/RexB. Requires Mg(2+) as cofactor.

It catalyses the reaction Couples ATP hydrolysis with the unwinding of duplex DNA by translocating in the 3'-5' direction.. The catalysed reaction is ATP + H2O = ADP + phosphate + H(+). Functionally, the heterodimer acts as both an ATP-dependent DNA helicase and an ATP-dependent, dual-direction single-stranded exonuclease. Recognizes the chi site generating a DNA molecule suitable for the initiation of homologous recombination. The AddA nuclease domain is required for chi fragment generation; this subunit has the helicase and 3' -&gt; 5' nuclease activities. This Staphylococcus epidermidis (strain ATCC 12228 / FDA PCI 1200) protein is ATP-dependent helicase/nuclease subunit A.